A 214-amino-acid chain; its full sequence is Thymidylate kinase (214 aa).

An ATP-binding site is contributed by 9 to 16 (GIEGCGKT).

This sequence belongs to the thymidylate kinase family.

It carries out the reaction dTMP + ATP = dTDP + ADP. In terms of biological role, phosphorylation of dTMP to form dTDP in both de novo and salvage pathways of dTTP synthesis. The protein is Thymidylate kinase of Geotalea daltonii (strain DSM 22248 / JCM 15807 / FRC-32) (Geobacter daltonii).